The chain runs to 362 residues: sn-glycerol-3-phosphate import ATP-binding protein UgpC (362 aa).

In terms of domain architecture, ABC transporter spans 4 to 235; it reads LTLQSVKKTY…PATVFVASFI (232 aa). 37 to 44 is a binding site for ATP; that stretch reads GPSGCGKS.

This sequence belongs to the ABC transporter superfamily. sn-glycerol-3-phosphate importer (TC 3.A.1.1.3) family. The complex is composed of two ATP-binding proteins (UgpC), two transmembrane proteins (UgpA and UgpE) and a solute-binding protein (UgpB).

Its subcellular location is the cell inner membrane. The catalysed reaction is sn-glycerol 3-phosphate(out) + ATP + H2O = sn-glycerol 3-phosphate(in) + ADP + phosphate + H(+). Functionally, part of the ABC transporter complex UgpBAEC involved in sn-glycerol-3-phosphate (G3P) import. Responsible for energy coupling to the transport system. This is sn-glycerol-3-phosphate import ATP-binding protein UgpC from Paraburkholderia xenovorans (strain LB400).